Here is a 1335-residue protein sequence, read N- to C-terminus: Regulatory-associated protein of mTOR (1335 aa).

2 positions are modified to phosphoserine: S44 and S122. Residue S696 is modified to Phosphoserine; by MAPK8. O-linked (GlcNAc) threonine glycosylation is present at T700. T706 is subject to Phosphothreonine; by MAPK8. 2 positions are modified to phosphoserine; by RPS6KA1: S719 and S721. The residue at position 722 (S722) is a Phosphoserine; by AMPK and RPS6KA1. Residue S738 is modified to Phosphoserine. The tract at residues 749 to 771 (GSSVAFSPGNLSTSSSASSTLGS) is disordered. Residues 755 to 771 (SPGNLSTSSSASSTLGS) show a composition bias toward low complexity. The residue at position 791 (S791) is a Phosphoserine. Phosphoserine; by AMPK is present on S792. S836 and S855 each carry phosphoserine. The span at 853 to 866 (TSSLTQSAPASPTN) shows a compositional bias: polar residues. Positions 853–942 (TSSLTQSAPA…GPDQTTDDAD (90 aa)) are disordered. At S859 the chain carries Phosphoserine; by MTOR. S863 carries the phosphoserine; by MAPK8, MTOR and NLK modification. T865 bears the Phosphothreonine mark. S877 bears the Phosphoserine mark. The segment covering 877-887 (SPPASSTSSCS) has biased composition (low complexity). A compositionally biased stretch (polar residues) spans 888–898 (LTNDVAKQTVS). Residues K932 and K948 each participate in a glycyl lysine isopeptide (Lys-Gly) (interchain with G-Cter in ubiquitin) cross-link. At S982 the chain carries Phosphoserine. 7 WD repeats span residues 1020 to 1061 (NRNP…DYFH), 1065 to 1106 (PRYT…EKNP), 1121 to 1160 (TTRG…KVQD), 1164 to 1203 (GADS…SECR), 1209 to 1249 (EHTA…SVNV), 1251 to 1291 (QIVK…NNIK), and 1299 to 1335 (QRVG…KRVR). K1097 carries the N6-acetyllysine modification.

This sequence belongs to the WD repeat RAPTOR family. In terms of assembly, part of the mechanistic target of rapamycin complex 1 (mTORC1) which contains MTOR, MLST8 and RPTOR. mTORC1 associates with AKT1S1/PRAS40, which inhibits its activity. mTORC1 associates with DEPTOR, which regulates its activity. mTORC1 binds to and is inhibited by FKBP12-rapamycin. Forms a complex with MTOR under both leucine-rich and -poor conditions. Interacts with (via TOS motifs) EIF4EBP1 and RPS6KB1; interaction is independent of its association with MTOR. Binds preferentially to poorly or non-phosphorylated forms of EIF4EBP1, and this binding is critical to the ability of MTOR to catalyze phosphorylation. Interacts with ULK1 in a nutrient-dependent manner; the interaction is reduced during starvation. Interacts with GTP-bound form of RagA/RRAGA or RagB/RRAGB and GDP-bound form of RagC/RRAGC or RagD/RRAGD, promoting recruitment of mTORC1 to the lysosomes. Interacts (when phosphorylated by AMPK) with 14-3-3 protein, leading to inhibition of its activity. Interacts with SPAG5; SPAG5 competes with MTOR for RPTOR-binding, resulting in decreased mTORC1 formation. Interacts with WAC; WAC positively regulates MTOR activity by promoting the assembly of the TTT complex composed of TELO2, TTI1 and TTI2 and the RUVBL complex composed of RUVBL1 and RUVBL2 into the TTT-RUVBL complex which leads to the dimerization of the mTORC1 complex and its subsequent activation. Interacts with G3BP1. The complex formed with G3BP1 and SPAG5 is increased by oxidative stress. Interacts with HTR6. Interacts with PIH1D1. Interacts with LARP1. Interacts with BRAT1. Interacts with SIK3. Interacts with SLC38A7; this interaction mediates the recruitment of mTORC1 to the lysosome and its subsequent activation. In terms of processing, insulin-stimulated phosphorylation at Ser-863 by MTOR and MAPK8 regulates mTORC1 activity. Phosphorylated at Ser-863 by NLK in response to stress, disrupting the interaction with small GTPases Rag (RagA/RRAGA, RagB/RRAGB, RagC/RRAGC and/or RagD/RRAGD), thereby preventing lysosome recruitment and activation of the mTORC1 complex. Osmotic stress also induces phosphorylation at Ser-696, Thr-706 and Ser-863 by MAPK8. Ser-863 phosphorylation is required for phosphorylation at Ser-855 and Ser-859. In response to nutrient limitation, phosphorylated at Ser-722 and Ser-792 by AMPK; phosphorylation promotes interaction with 14-3-3 proteins, leading to negative regulation of the mTORC1 complex. Phosphorylation at Ser-722 and Ser-792 by AMPK in response to glucose starvation inhibits O-GlcNAcylation by OGT and subsequent activation of mTORC1. In response to growth factors, phosphorylated at Ser-719, Ser-721 and Ser-722 by RPS6KA1, which stimulates mTORC1 activity. Phosphorylation at Ser-791 by PKA downstream of cAMP inhibits the mTORC1 complex. Phosphorylated at Ser-877 by TBK1, leading to negative regulation of the mTORC1 complex. Post-translationally, O-GlcNAcylated by OGT upon glucose sufficiency, promoting interaction with small GTPases Rag (RagA/RRAGA, RagB/RRAGB, RagC/RRAGC and/or RagD/RRAGD) and subsequent recruitment of mTORC1 to lysosomal membranes, leading to activation of the mTORC1 complex. Phosphorylation at Ser-722 and Ser-792 by AMPK in response to glucose starvation inhibits O-GlcNAcylation. Acetylation at Lys-1097 by EP300/p300 in response to leucine metabolite acetyl-coA promotes its activity, leading to activation of the mTORC1 complex. Acetylation is decreased in response to fasting. Phosphorylated at Ser-877 by TBK1, leading to negative regulation of the mTORC1 complex. In terms of processing, ubiquitinated, leading to its degradation by the proteasome. Deubiquitinated by OTUB1 via a non-catalytic mechanism. Ubiquitinated by an E3 ubiquitin ligase complex containing VHL.

The protein resides in the cytoplasm. It is found in the lysosome. The protein localises to the cytoplasmic granule. Component of the mechanistic target of rapamycin complex 1 (mTORC1), an evolutionarily conserved central nutrient sensor that stimulates anabolic reactions and macromolecule biosynthesis to promote cellular biomass generation and growth. In response to nutrients, growth factors or amino acids, mTORC1 is recruited to the lysosome membrane and promotes protein, lipid and nucleotide synthesis by phosphorylating several substrates, such as ribosomal protein S6 kinase (RPS6KB1 and RPS6KB2) and EIF4EBP1 (4E-BP1). In the same time, it inhibits catabolic pathways by phosphorylating the autophagy initiation components ULK1 and ATG13, as well as transcription factor TFEB, a master regulators of lysosomal biogenesis and autophagy. The mTORC1 complex is inhibited in response to starvation and amino acid depletion. Within the mTORC1 complex, RPTOR acts both as a molecular adapter, which (1) mediates recruitment of mTORC1 to lysosomal membranes via interaction with small GTPases Rag (RagA/RRAGA, RagB/RRAGB, RagC/RRAGC and/or RagD/RRAGD), and a (2) substrate-specific adapter, which promotes substrate specificity by binding to TOS motif-containing proteins and direct them towards the active site of the MTOR kinase domain for phosphorylation. mTORC1 complex regulates many cellular processes, such as odontoblast and osteoclast differentiation or neuronal transmission. mTORC1 complex in excitatory neuronal transmission is required for the prosocial behavior induced by the psychoactive substance lysergic acid diethylamide (LSD). The protein is Regulatory-associated protein of mTOR of Mus musculus (Mouse).